Reading from the N-terminus, the 343-residue chain is Glyceraldehyde-3-phosphate dehydrogenase 1 (343 aa).

NAD(+) is bound by residues 13-14 (RI), D35, R79, and S121. D-glyceraldehyde 3-phosphate is bound by residues 154–156 (SCT), T185, 214–215 (TG), and R237. C155 functions as the Nucleophile in the catalytic mechanism. N319 provides a ligand contact to NAD(+).

This sequence belongs to the glyceraldehyde-3-phosphate dehydrogenase family. In terms of assembly, homotetramer.

The protein resides in the cytoplasm. It catalyses the reaction D-glyceraldehyde 3-phosphate + phosphate + NAD(+) = (2R)-3-phospho-glyceroyl phosphate + NADH + H(+). It participates in carbohydrate degradation; glycolysis; pyruvate from D-glyceraldehyde 3-phosphate: step 1/5. Functionally, catalyzes the oxidative phosphorylation of glyceraldehyde 3-phosphate (G3P) to 1,3-bisphosphoglycerate (BPG) using the cofactor NAD. The first reaction step involves the formation of a hemiacetal intermediate between G3P and a cysteine residue, and this hemiacetal intermediate is then oxidized to a thioester, with concomitant reduction of NAD to NADH. The reduced NADH is then exchanged with the second NAD, and the thioester is attacked by a nucleophilic inorganic phosphate to produce BPG. This Trichormus variabilis (strain ATCC 29413 / PCC 7937) (Anabaena variabilis) protein is Glyceraldehyde-3-phosphate dehydrogenase 1 (gap1).